Consider the following 215-residue polypeptide: MRIGILGGTFDPIHYGHIRPAIEVKEALGLDKVLLMPNHIPPHKHQPNLSTAQRLKMVADVCAELAGFELCDIEANRDTPSYTVVTLEQLSTQYPNAELFFIMGMDSFIHLQSWHKWQQIFGFANLVLCQRPGWHLSNEHPMQQVLMERSAAIDTLKNPPQKHYPIHGRIFTVDITPQDISSTQIRSALAIGKIPTDALMPVTLNYIQKQQLYLS.

This sequence belongs to the NadD family.

The catalysed reaction is nicotinate beta-D-ribonucleotide + ATP + H(+) = deamido-NAD(+) + diphosphate. It participates in cofactor biosynthesis; NAD(+) biosynthesis; deamido-NAD(+) from nicotinate D-ribonucleotide: step 1/1. Catalyzes the reversible adenylation of nicotinate mononucleotide (NaMN) to nicotinic acid adenine dinucleotide (NaAD). The chain is Probable nicotinate-nucleotide adenylyltransferase from Shewanella sp. (strain W3-18-1).